The sequence spans 379 residues: Homoserine O-succinyltransferase (379 aa).

Residues 48 to 357 (NAVLICHALS…SAHGHDAFLM (310 aa)) form the AB hydrolase-1 domain. S154 acts as the Nucleophile in catalysis. Residue R224 participates in substrate binding. Catalysis depends on residues D319 and H352. D353 lines the substrate pocket.

Belongs to the AB hydrolase superfamily. MetX family. Homodimer.

It is found in the cytoplasm. It carries out the reaction L-homoserine + succinyl-CoA = O-succinyl-L-homoserine + CoA. Its pathway is amino-acid biosynthesis; L-methionine biosynthesis via de novo pathway; O-succinyl-L-homoserine from L-homoserine: step 1/1. Functionally, transfers a succinyl group from succinyl-CoA to L-homoserine, forming succinyl-L-homoserine. This chain is Homoserine O-succinyltransferase, found in Neisseria meningitidis serogroup B (strain ATCC BAA-335 / MC58).